The following is a 244-amino-acid chain: Krueppel-like factor 9 (244 aa).

Residues 80-142 (SVCSDSLESP…AKGKHASEKR (63 aa)) form a disordered region. S122 is modified (phosphoserine). C2H2-type zinc fingers lie at residues 143–167 (HKCP…YRVH), 173–197 (FPCT…YRTH), and 203–225 (FRCP…ARRH).

It belongs to the Sp1 C2H2-type zinc-finger protein family. In terms of assembly, interacts with ZZEF1. Epidermis (at protein level).

It is found in the nucleus. Its function is as follows. Transcription factor that binds to GC box promoter elements. Selectively activates mRNA synthesis from genes containing tandem repeats of GC boxes but represses genes with a single GC box. Acts as an epidermal circadian transcription factor regulating keratinocyte proliferation. This Homo sapiens (Human) protein is Krueppel-like factor 9 (KLF9).